The following is a 379-amino-acid chain: Queuine tRNA-ribosyltransferase (379 aa).

The active-site Proton acceptor is Asp-95. Residues 95–99 (DSGGF), Asp-149, Gln-197, and Gly-224 contribute to the substrate site. Residues 255 to 261 (GVGMPAE) form an RNA binding region. Catalysis depends on Asp-274, which acts as the Nucleophile. Zn(2+)-binding residues include Cys-312, Cys-314, Cys-317, and His-343.

The protein belongs to the queuine tRNA-ribosyltransferase family. In terms of assembly, homodimer. Within each dimer, one monomer is responsible for RNA recognition and catalysis, while the other monomer binds to the replacement base PreQ1. Zn(2+) is required as a cofactor.

The catalysed reaction is 7-aminomethyl-7-carbaguanine + guanosine(34) in tRNA = 7-aminomethyl-7-carbaguanosine(34) in tRNA + guanine. The protein operates within tRNA modification; tRNA-queuosine biosynthesis. In terms of biological role, catalyzes the base-exchange of a guanine (G) residue with the queuine precursor 7-aminomethyl-7-deazaguanine (PreQ1) at position 34 (anticodon wobble position) in tRNAs with GU(N) anticodons (tRNA-Asp, -Asn, -His and -Tyr). Catalysis occurs through a double-displacement mechanism. The nucleophile active site attacks the C1' of nucleotide 34 to detach the guanine base from the RNA, forming a covalent enzyme-RNA intermediate. The proton acceptor active site deprotonates the incoming PreQ1, allowing a nucleophilic attack on the C1' of the ribose to form the product. After dissociation, two additional enzymatic reactions on the tRNA convert PreQ1 to queuine (Q), resulting in the hypermodified nucleoside queuosine (7-(((4,5-cis-dihydroxy-2-cyclopenten-1-yl)amino)methyl)-7-deazaguanosine). This is Queuine tRNA-ribosyltransferase from Solibacter usitatus (strain Ellin6076).